The following is a 105-amino-acid chain: MVRYRMRSPSEGPHQGPGQDHEREEQGQGQELSPERVEDYGRTHRGHHRHRRCSRKRLHRIHKRRRSCRRRRRHSCCHRRRHRRGCRRSRRRRRCKCRKCRRHCH.

Residues M1–H74 are disordered. Phosphoserine occurs at positions 8, 10, and 33. Positions S33–R42 are enriched in basic and acidic residues. Positions T43–H74 are enriched in basic residues.

The protein belongs to the protamine P2 family. Interacts with TDRP. In terms of processing, proteolytic processing into mature chains is required for histone eviction during spermatogenesis. Transition proteins (TNP1 and TNP2) are required for processing. In terms of tissue distribution, testis.

The protein localises to the nucleus. It localises to the chromosome. Protamines substitute for histones in the chromatin of sperm during the haploid phase of spermatogenesis. They compact sperm DNA into a highly condensed, stable and inactive complex. In Rattus fuscipes (Bush rat), this protein is Protamine-2 (Prm2).